Reading from the N-terminus, the 364-residue chain is RNA-binding protein ZC3H11 (364 aa).

The C3H1-type zinc-finger motif lies at Arg-64 to Glu-92. An MKT1-binding motif motif is present at residues Val-194–Tyr-199. The segment at Glu-340 to Leu-364 is disordered. Residues Leu-346–Gly-357 are compositionally biased toward basic and acidic residues.

Interacts (via MKT1-binding motif) with MKT1. Interacts with PBP1 (via C-terminus); the interaction is direct. Phosphorylated at the N-terminus. CK1.2-dependent phosphorylation may lead to proteasome-dependent degradation of ZC3H11 in absence of stress.

It localises to the cytoplasm. RNA-binding protein involved in regulation of mRNA stability. Binds AU-rich regions in the 3'-UTR of mRNAs and promotes their stabilization by recruiting a MKT1-containing complex. Stabilizes chaperone mRNAs during stress that causes an accumulation of misfolded or unfolded proteins in the cytoplasm. In Trypanosoma brucei brucei (strain 927/4 GUTat10.1), this protein is RNA-binding protein ZC3H11.